We begin with the raw amino-acid sequence, 492 residues long: Lysine--tRNA ligase (492 aa).

Mg(2+)-binding residues include E403 and E410.

It belongs to the class-II aminoacyl-tRNA synthetase family. As to quaternary structure, homodimer. Mg(2+) serves as cofactor.

The protein localises to the cytoplasm. It catalyses the reaction tRNA(Lys) + L-lysine + ATP = L-lysyl-tRNA(Lys) + AMP + diphosphate. The protein is Lysine--tRNA ligase of Mycoplasmoides gallisepticum (strain R(low / passage 15 / clone 2)) (Mycoplasma gallisepticum).